The following is a 38-amino-acid chain: Large ribosomal subunit protein bL36 (38 aa).

It belongs to the bacterial ribosomal protein bL36 family.

The chain is Large ribosomal subunit protein bL36 from Streptococcus agalactiae serotype III (strain NEM316).